Here is a 228-residue protein sequence, read N- to C-terminus: MLLSLTQMLSSRASSRLFLVSYLLLWENVVSTSTCAEKDATIQDSLEKLLTLTTFMSQVVSSETAKLFTEFNNQYAQGKRYNDRIPGTCHTEFFDTPVNKEQSLVRTPETLLTLVHSLLNSWTNALNHLVNEMSTMQGDTSSLISKAREIQAKFDELTTGVKIVQSMIGERDIATYSAWSGLASLQSSNEDVRCFSFYTMIRCLLRDSRKVNTYLEVIKYKMVDQNNC.

A signal peptide spans 1-31 (MLLSLTQMLSSRASSRLFLVSYLLLWENVVS). Cystine bridges form between C89–C194 and C203–C228.

The protein belongs to the somatotropin/prolactin family. As to expression, expressed specifically in placenta. Expressed at high levels in trophoblast cells from both junctional and labyrinth zones of the chorioallantoic placenta the last week of gestation.

Its subcellular location is the secreted. In Mus musculus (Mouse), this protein is Prolactin-2B1 (Prl2b1).